A 361-amino-acid chain; its full sequence is UDP-3-O-acylglucosamine N-acyltransferase (361 aa).

The active-site Proton acceptor is the His253.

It belongs to the transferase hexapeptide repeat family. LpxD subfamily. In terms of assembly, homotrimer.

The catalysed reaction is a UDP-3-O-[(3R)-3-hydroxyacyl]-alpha-D-glucosamine + a (3R)-hydroxyacyl-[ACP] = a UDP-2-N,3-O-bis[(3R)-3-hydroxyacyl]-alpha-D-glucosamine + holo-[ACP] + H(+). The protein operates within bacterial outer membrane biogenesis; LPS lipid A biosynthesis. In terms of biological role, catalyzes the N-acylation of UDP-3-O-acylglucosamine using 3-hydroxyacyl-ACP as the acyl donor. Is involved in the biosynthesis of lipid A, a phosphorylated glycolipid that anchors the lipopolysaccharide to the outer membrane of the cell. This Burkholderia thailandensis (strain ATCC 700388 / DSM 13276 / CCUG 48851 / CIP 106301 / E264) protein is UDP-3-O-acylglucosamine N-acyltransferase.